The primary structure comprises 430 residues: Adenylosuccinate synthetase (430 aa).

Residues 13–19 (GDEGKGK) and 41–43 (GHT) contribute to the GTP site. Catalysis depends on Asp-14, which acts as the Proton acceptor. Residues Asp-14 and Gly-41 each coordinate Mg(2+). IMP-binding positions include 14-17 (DEGK), 39-42 (NAGH), Thr-130, Arg-144, Gln-225, Thr-240, and Arg-304. His-42 (proton donor) is an active-site residue. Residue 300–306 (STTGRAR) coordinates substrate. Residues Arg-306, 332-334 (KLD), and 414-416 (STG) each bind GTP.

Belongs to the adenylosuccinate synthetase family. Homodimer. It depends on Mg(2+) as a cofactor.

Its subcellular location is the cytoplasm. It carries out the reaction IMP + L-aspartate + GTP = N(6)-(1,2-dicarboxyethyl)-AMP + GDP + phosphate + 2 H(+). It participates in purine metabolism; AMP biosynthesis via de novo pathway; AMP from IMP: step 1/2. Plays an important role in the de novo pathway of purine nucleotide biosynthesis. Catalyzes the first committed step in the biosynthesis of AMP from IMP. This Alcanivorax borkumensis (strain ATCC 700651 / DSM 11573 / NCIMB 13689 / SK2) protein is Adenylosuccinate synthetase.